The sequence spans 252 residues: 3-dehydroquinate dehydratase (252 aa).

Residues 46-48 (EWR) and Arg82 each bind 3-dehydroquinate. Residue His143 is the Proton donor/acceptor of the active site. Lys170 functions as the Schiff-base intermediate with substrate in the catalytic mechanism. Positions 212, 231, and 235 each coordinate 3-dehydroquinate.

Belongs to the type-I 3-dehydroquinase family. In terms of assembly, homodimer.

The catalysed reaction is 3-dehydroquinate = 3-dehydroshikimate + H2O. Its pathway is metabolic intermediate biosynthesis; chorismate biosynthesis; chorismate from D-erythrose 4-phosphate and phosphoenolpyruvate: step 3/7. Involved in the third step of the chorismate pathway, which leads to the biosynthesis of aromatic amino acids. Catalyzes the cis-dehydration of 3-dehydroquinate (DHQ) and introduces the first double bond of the aromatic ring to yield 3-dehydroshikimate. The sequence is that of 3-dehydroquinate dehydratase from Listeria innocua serovar 6a (strain ATCC BAA-680 / CLIP 11262).